The chain runs to 98 residues: ATP-dependent Clp protease adapter protein ClpS (98 aa).

It belongs to the ClpS family. As to quaternary structure, binds to the N-terminal domain of the chaperone ClpA.

In terms of biological role, involved in the modulation of the specificity of the ClpAP-mediated ATP-dependent protein degradation. The polypeptide is ATP-dependent Clp protease adapter protein ClpS (Synechocystis sp. (strain ATCC 27184 / PCC 6803 / Kazusa)).